Consider the following 833-residue polypeptide: Phosphatidylinositol-3-phosphatase myotubularin-2 (833 aa).

A GRAM domain is found at 42–109 (GSYSNLDCLL…VAIEKFNKLA (68 aa)). One can recognise a Myotubularin phosphatase domain in the interval 181-647 (TNPKERLLNE…LAPTLWPQFH (467 aa)). Substrate is bound by residues 329–332 (NGAK), 354–355 (NI), 440–446 (CSDGWDR), and arginine 486. The Phosphocysteine intermediate role is filled by cysteine 440. A disordered region spans residues 503–530 (QSSSARSFPSSPVRQSPGSAAAQSSSSS). Residues 504 to 530 (SSSARSFPSSPVRQSPGSAAAQSSSSS) show a composition bias toward low complexity. Positions 660–717 (ETEDQCRAMTVKYSEMKKEKEEAERKVDELSSAMESLNEELLNERDISRAARESAKRA) form a coiled coil. The interval 753–772 (KCSHSIPQKQSEDNTTDVSE) is disordered.

It belongs to the protein-tyrosine phosphatase family. Non-receptor class myotubularin subfamily. Mostly expressed in flowers and roots, and, to a lower extent, in siliques and leaves.

The protein localises to the cytoplasm. The enzyme catalyses a 1,2-diacyl-sn-glycero-3-phospho-(1D-myo-inositol-3-phosphate) + H2O = a 1,2-diacyl-sn-glycero-3-phospho-(1D-myo-inositol) + phosphate. The catalysed reaction is a 1,2-diacyl-sn-glycero-3-phospho-(1D-myo-inositol-3,5-bisphosphate) + H2O = a 1,2-diacyl-sn-glycero-3-phospho-(1D-myo-inositol-5-phosphate) + phosphate. Functionally, phosphatase with phosphoinositide 3'-phosphatase activity that can use phosphatidylinositol-3-phosphate (PtdIns3P) and phosphatidylinositol-3,5-diphosphate (PtdIns3,5P(2)) as substrates and produces phosphatidylinositol-5-phosphate (PtdIns5P); participates in pathway(s) that transfer gene regulatory signals to the nucleus. The protein is Phosphatidylinositol-3-phosphatase myotubularin-2 (MTM2) of Arabidopsis thaliana (Mouse-ear cress).